The chain runs to 122 residues: MRVILAITLLFVAGSFIATASKGRNYPRFFKHRMKLREIRGFKPEYISTAIGFGKRESPAERIPDLRGRERILLPVLRNFPRGVRILVPFSQLQVDAASMSSAAKSTVYAGLGDDSKKGTIA.

An N-terminal signal peptide occupies residues M1–G23. A propeptide spanning residues R24–R40 is cleaved from the precursor. Residue F53 is modified to Phenylalanine amide. A propeptide spanning residues E57 to A122 is cleaved from the precursor.

Expressed in brain and ventral ganglia but not in the retrocerebral complex (at protein level).

It is found in the secreted. Neuropeptide stimulator of juvenile hormone synthesis. In Camponotus floridanus (Florida carpenter ant), this protein is Allatotropin.